A 944-amino-acid chain; its full sequence is Leucine--tRNA ligase (944 aa).

Residues 40–51 (PYPSGAGLHVGH) carry the 'HIGH' region motif. The 'KMSKS' region motif lies at 718-722 (KMSKS). Lysine 721 is an ATP binding site.

The protein belongs to the class-I aminoacyl-tRNA synthetase family.

The protein localises to the cytoplasm. The enzyme catalyses tRNA(Leu) + L-leucine + ATP = L-leucyl-tRNA(Leu) + AMP + diphosphate. The chain is Leucine--tRNA ligase from Phocaeicola vulgatus (strain ATCC 8482 / DSM 1447 / JCM 5826 / CCUG 4940 / NBRC 14291 / NCTC 11154) (Bacteroides vulgatus).